The following is a 313-amino-acid chain: 3-ketodihydrosphingosine reductase TSC10 (313 aa).

Leu-12 is an NADP(+) binding site. Gly-15, Ser-17, and Gly-19 together coordinate NADPH. Positions 15–19 match the GXSXG motif; sequence GGSQG. Residue Leu-20 participates in NADP(+) binding. Positions 47, 51, and 86 each coordinate NADPH. Residue Asp-86 coordinates NADP(+). Ser-160 acts as the Proton donor in catalysis. NADP(+)-binding residues include Tyr-174, Lys-178, and Ser-207. Tyr-174 serves as the catalytic Proton acceptor. The active-site Lowers pKa of active site Tyr is Lys-178. A helical membrane pass occupies residues 278–298; that stretch reads VFSWILGALLNITIVPIYMLI.

Belongs to the short-chain dehydrogenases/reductases (SDR) family.

The protein resides in the endoplasmic reticulum membrane. The enzyme catalyses sphinganine + NADP(+) = 3-oxosphinganine + NADPH + H(+). The protein operates within lipid metabolism; sphingolipid metabolism. Functionally, catalyzes the reduction of 3'-oxosphinganine (3-ketodihydrosphingosine/KDS) to sphinganine (dihydrosphingosine/DHS), the second step of de novo sphingolipid biosynthesis. The polypeptide is 3-ketodihydrosphingosine reductase TSC10 (TSC10) (Kluyveromyces lactis (strain ATCC 8585 / CBS 2359 / DSM 70799 / NBRC 1267 / NRRL Y-1140 / WM37) (Yeast)).